The chain runs to 312 residues: tRNA pseudouridine synthase B (312 aa).

Asp-46 (nucleophile) is an active-site residue. Tyr-74, Tyr-177, and Leu-198 together coordinate substrate.

It belongs to the pseudouridine synthase TruB family. Type 1 subfamily.

It carries out the reaction uridine(55) in tRNA = pseudouridine(55) in tRNA. Responsible for synthesis of pseudouridine from uracil-55 in the psi GC loop of transfer RNAs. This Buchnera aphidicola subsp. Schizaphis graminum (strain Sg) protein is tRNA pseudouridine synthase B.